Consider the following 809-residue polypeptide: Leucine-rich repeat and calponin homology domain-containing protein (809 aa).

The interval 27-53 (GSASLPGSGTGSGSGIGHAGNTSSSTS) is disordered. Over residues 34-44 (SGTGSGSGIGH) the composition is skewed to gly residues. LRR repeat units lie at residues 72–96 (EAHF…GTKY), 98–121 (LTDT…VTTF), 122–144 (AFLE…VKQL), 145–168 (SSLT…CFLP), 170–189 (QVLL…LGRL), 191–213 (QTLT…LGEL), 214–236 (RSLR…LTCL), 238–258 (LISL…IRHM), and 260–282 (TLVE…CMRG). Disordered stretches follow at residues 295–373 (TKDE…LHCV), 423–442 (LSYA…QDDD), and 490–550 (KHPN…VDDV). Residues 319 to 336 (HNSSGNVLEASTTGSTNN) show a composition bias toward polar residues. The segment covering 351-368 (GLDKRWSHDAPTKSKTDS) has biased composition (basic and acidic residues). Over residues 518–532 (NTLPKSIMKQNSNQI) the composition is skewed to polar residues. Positions 662–776 (QREETELMSQ…TVGELFRLHG (115 aa)) constitute a Calponin-homology (CH) domain. The disordered stretch occupies residues 783-809 (GNSSGAATPTKSPTRTTRATMSPTPLA). A compositionally biased stretch (polar residues) spans 788–809 (AATPTKSPTRTTRATMSPTPLA).

It is found in the cytoplasm. The protein resides in the cytoskeleton. It localises to the cell cortex. The protein localises to the cleavage furrow. Functionally, may play a role in the stabilization of the actin-rich cell cortex during cell division. This is Leucine-rich repeat and calponin homology domain-containing protein from Drosophila melanogaster (Fruit fly).